The chain runs to 147 residues: MLEFLRKLIPWVLAGMLFGLGWHLGSDSMDAKWKQEVHNEYVKRVEATASTQRAINEISAKYQEDLAALEGSTDRIISDLRQDNKRLRVRVKPTGTSEGQCGFEPDDRAELDDRDAKRILSVTQKGDAWIRALQDTIRELQRKQEIK.

At methionine 1–lysine 7 the chain is on the cytoplasmic side. A helical; Signal-anchor for type II membrane protein membrane pass occupies residues leucine 8 to leucine 24. Over glycine 25–lysine 143 the chain is Periplasmic.

Belongs to the T7likevirus i-spanin family. As to quaternary structure, interacts (via C-terminus) with the spanin outer lipoprotein subunit (o-spanin) (via C-terminus). Part of the spanin complex which spans the entire periplasmic space. The spanin complex is composed of spanin inner membrane subunit and spanin outer membrane subunit.

The protein resides in the host cell inner membrane. Its function is as follows. Component of the spanin complex that disrupts the host outer membrane and participates in cell lysis during virus exit. The spanin complex conducts the final step in host lysis by disrupting the outer membrane after holin and endolysin action have permeabilized the inner membrane and degraded the host peptidoglycans. Host outer membrane disruption is possibly due to local fusion between the inner and outer membrane performed by the spanin complex. The polypeptide is Spanin, inner membrane subunit (18.5) (Escherichia coli (Bacteriophage T3)).